Consider the following 309-residue polypeptide: tRNA-cytidine(32) 2-sulfurtransferase (309 aa).

Residues 47–52 (SGGKDS) carry the PP-loop motif motif. 3 residues coordinate [4Fe-4S] cluster: Cys-122, Cys-125, and Cys-213.

This sequence belongs to the TtcA family. As to quaternary structure, homodimer. Requires Mg(2+) as cofactor. [4Fe-4S] cluster serves as cofactor.

Its subcellular location is the cytoplasm. The catalysed reaction is cytidine(32) in tRNA + S-sulfanyl-L-cysteinyl-[cysteine desulfurase] + AH2 + ATP = 2-thiocytidine(32) in tRNA + L-cysteinyl-[cysteine desulfurase] + A + AMP + diphosphate + H(+). It functions in the pathway tRNA modification. Catalyzes the ATP-dependent 2-thiolation of cytidine in position 32 of tRNA, to form 2-thiocytidine (s(2)C32). The sulfur atoms are provided by the cysteine/cysteine desulfurase (IscS) system. This chain is tRNA-cytidine(32) 2-sulfurtransferase, found in Erwinia tasmaniensis (strain DSM 17950 / CFBP 7177 / CIP 109463 / NCPPB 4357 / Et1/99).